A 213-amino-acid chain; its full sequence is Dimethylamine corrinoid protein 3 (213 aa).

Positions 1 to 91 (MADIEGLLHE…DLPAGAEKKL (91 aa)) constitute a B12-binding N-terminal domain. The region spanning 92–213 (GVIVNGTVEG…AVAKAKELLL (122 aa)) is the B12-binding domain. His104 is a methylcob(III)alamin binding site.

It belongs to the methylamine corrinoid protein family.

It functions in the pathway one-carbon metabolism; methanogenesis from dimethylamine. Acts as a methyl group carrier between MtbB and MtbA. The protein is Dimethylamine corrinoid protein 3 (mtbC3) of Methanosarcina acetivorans (strain ATCC 35395 / DSM 2834 / JCM 12185 / C2A).